A 659-amino-acid chain; its full sequence is Centrosomal protein of 76 kDa (659 aa).

A phosphoserine mark is found at serine 75 and serine 83.

This sequence belongs to the CEP76 family. As to quaternary structure, interacts with CCP110 and CEP97.

The protein localises to the cytoplasm. It is found in the cytoskeleton. The protein resides in the microtubule organizing center. It localises to the centrosome. Its subcellular location is the centriole. Functionally, centrosomal protein involved in regulation of centriole duplication. Required to limit centriole duplication to once per cell cycle by preventing centriole reduplication. In Mus musculus (Mouse), this protein is Centrosomal protein of 76 kDa (Cep76).